Here is an 838-residue protein sequence, read N- to C-terminus: Pentatricopeptide repeat-containing protein At4g19440, chloroplastic (838 aa).

A chloroplast-targeting transit peptide spans Met-1 to Arg-32. 16 PPR repeats span residues Ser-238–Gly-268, Asp-272–Pro-306, Asn-307–Pro-341, Thr-342–Pro-376, Asn-377–Leu-411, Thr-412–Val-446, Asn-447–Pro-481, Gly-482–Val-516, Asp-517–Met-551, Asp-552–Pro-586, Asp-587–Pro-621, Asp-622–Pro-656, Asn-657–Pro-691, Asn-692–Pro-726, Asn-727–Pro-761, and Asn-762–Pro-796.

The protein belongs to the PPR family. P subfamily.

Its subcellular location is the plastid. It localises to the chloroplast. The polypeptide is Pentatricopeptide repeat-containing protein At4g19440, chloroplastic (Arabidopsis thaliana (Mouse-ear cress)).